The chain runs to 345 residues: Annexin A9 (345 aa).

4 Annexin repeats span residues Phe41–Gln112, Pro113–Lys184, Asn197–Ser266, and Asn270–Arg341.

It belongs to the annexin family. As to quaternary structure, homodimer.

Its function is as follows. May act as a low affinity receptor for acetylcholine. This Mus musculus (Mouse) protein is Annexin A9 (Anxa9).